The sequence spans 655 residues: Epithelial sodium channel subunit gamma (655 aa).

The Cytoplasmic portion of the chain corresponds to 1–55 (MAPGEKIKAKIKKNLPVRGPQAPTIKDLMHWYCLNTNTHGCRRIVVSRGRLRRLL). Residues 56 to 76 (WIAFTLTAVALIIWQCALLVF) traverse the membrane as a helical segment. Topologically, residues 77–547 (SFYTVSVSIK…GGQLGLWMSC (471 aa)) are extracellular. 8 disulfide bridges follow: cysteine 100–cysteine 289, cysteine 213–cysteine 220, cysteine 266–cysteine 273, cysteine 378–cysteine 463, cysteine 400–cysteine 459, cysteine 404–cysteine 455, cysteine 413–cysteine 440, and cysteine 415–cysteine 429. A gating release of inhibition by proteolysis (GRIP); protease-sensitive region that is responsible for the proteolytic activation of the channel region spans residues 140–227 (RKRREAGSMR…SDCATYTFSS (88 aa)). Asparagine 215 carries an N-linked (GlcNAc...) asparagine glycan. Asparagine 277 is a glycosylation site (N-linked (GlcNAc...) asparagine). Asparagine 503 carries an N-linked (GlcNAc...) asparagine glycan. A helical membrane pass occupies residues 548–568 (SVVCVIEIIEVFFIDFFSIIA). The Cytoplasmic segment spans residues 569 to 655 (RRQWQKAKDW…LTDTQLTNEF (87 aa)). Residues 582 to 636 (RRTPPSTETPSSQQGQDNPALDTDDDLPTFTSAMRLPPAPEAPVPGTPPPRYNTL) form a disordered region. Residues 585-598 (PPSTETPSSQQGQD) are compositionally biased toward polar residues. Over residues 618–632 (PPAPEAPVPGTPPPR) the composition is skewed to pro residues. Positions 629–633 (PPPRY) match the PY motif; recruits WW domain-containing proteins and is thereby required for ubiquitination and inhibition of the channel by NEDD4 and NEDD4L motif.

The protein belongs to the amiloride-sensitive sodium channel (TC 1.A.6) family. SCNN1G subfamily. In terms of assembly, component of the heterotrimeric epithelial sodium channel (ENaC) composed of an alpha/SCNN1A, a beta/SCNN1B and a gamma/SCNN1G subunit. Interacts with WWP1 (via WW domains). Interacts with WWP2 (via WW domains); inhibits the channel. Interacts with the full-length immature form of PCSK9 (pro-PCSK9); inhibits ENaC by promoting its proteasomal degradation. Interacts with BPIFA1; the interaction is indirect via SCNN1B and inhibits the proteolytic maturation of SCNN1A and SCNN1G and the activation of ENaC. Phosphorylated on serine and threonine residues. Aldosterone and insulin increase the basal level of phosphorylation. Post-translationally, ubiquitinated. Can be ubiquitinated at multiple sites and undergo monoubiquitination and polyubiquitination. Ubiquitination by NEDD4 or NEDD4L inhibits the ENaC channel through endocytosis, intracellular retention and degradation of its individual subunits. In terms of processing, ENaC is activated through the proteolytic maturation of its subunits. Furin cleaves the SCNN1G subunit first, followed by cleavage by prostasin (PRSS8), which results in a stepwise increase in the open probability of the channel due to the release of an inhibitory tract. BPIFA1, which is recruited by the SCNN1B subunit, prevents the proteolytic activation of ENaC. N-glycosylated. N-linked glycans are processed to complex type during ENaC complex assembly and transport to the plasma membrane. Lung and kidney.

It localises to the apical cell membrane. The catalysed reaction is Na(+)(in) = Na(+)(out). Its activity is regulated as follows. Originally identified and characterized by its inhibition by the diuretic drug amiloride. In terms of biological role, this is one of the three pore-forming subunits of the heterotrimeric epithelial sodium channel (ENaC), a critical regulator of sodium balance and fluid homeostasis. ENaC operates in epithelial tissues, where it mediates the electrodiffusion of sodium ions from extracellular fluid through the apical membrane of cells, with water following osmotically. It plays a key role in maintaining sodium homeostasis through electrogenic sodium reabsorption in the kidneys. Additionally, ENaC is essential for airway surface liquid homeostasis, which is crucial for proper mucus clearance. The sequence is that of Epithelial sodium channel subunit gamma from Mus musculus (Mouse).